A 378-amino-acid chain; its full sequence is MKFVIAPDSFKESLTALEVATAIETGFKRVFPDADYVKLPMADGGEGTVQSLVDATQGKLIECEVTAPLGDKVKSFFGLSGDGKTAIIEMAAASGLHLVPPEKRNPLLTTSYGTGELIKLALDLGVESFILGIGGSATNDGGVGMLQALGMQCLDSQDKPIGFGGAELANIVKIDVQQLDPRLQQVHIEVACDVNNPLCGECGASAIFGPQKGATPEMVKQLDAALSHFAEIAERDCGKQIRDQAGAGAAGGMGGGLLLLPSVQLKAGIQIVLDRLHLIDYVKDADVVITGEGRIDAQSIMGKTPIGVARTAKQFNKPVIAIAGCLREDYDVVFDHGIDAVFPIIHQLGDLSDILKQGEQNLISTAQNVARVLAFKFH.

It belongs to the glycerate kinase type-1 family.

It carries out the reaction (R)-glycerate + ATP = (2R)-3-phosphoglycerate + ADP + H(+). In Haemophilus influenzae (strain ATCC 51907 / DSM 11121 / KW20 / Rd), this protein is Glycerate kinase (glxK).